Reading from the N-terminus, the 161-residue chain is SsrA-binding protein (161 aa).

The protein belongs to the SmpB family.

The protein localises to the cytoplasm. Functionally, required for rescue of stalled ribosomes mediated by trans-translation. Binds to transfer-messenger RNA (tmRNA), required for stable association of tmRNA with ribosomes. tmRNA and SmpB together mimic tRNA shape, replacing the anticodon stem-loop with SmpB. tmRNA is encoded by the ssrA gene; the 2 termini fold to resemble tRNA(Ala) and it encodes a 'tag peptide', a short internal open reading frame. During trans-translation Ala-aminoacylated tmRNA acts like a tRNA, entering the A-site of stalled ribosomes, displacing the stalled mRNA. The ribosome then switches to translate the ORF on the tmRNA; the nascent peptide is terminated with the 'tag peptide' encoded by the tmRNA and targeted for degradation. The ribosome is freed to recommence translation, which seems to be the essential function of trans-translation. In Psychromonas ingrahamii (strain DSM 17664 / CCUG 51855 / 37), this protein is SsrA-binding protein.